The primary structure comprises 236 residues: Adenosine 5'-phosphosulfate reductase (236 aa).

[4Fe-4S] cluster contacts are provided by C123, C124, C206, and C209. Catalysis depends on C232, which acts as the Nucleophile; cysteine thiosulfonate intermediate.

Belongs to the PAPS reductase family. CysH subfamily. [4Fe-4S] cluster serves as cofactor.

The protein resides in the cytoplasm. It catalyses the reaction [thioredoxin]-disulfide + sulfite + AMP + 2 H(+) = adenosine 5'-phosphosulfate + [thioredoxin]-dithiol. Its pathway is sulfur metabolism; hydrogen sulfide biosynthesis; sulfite from sulfate. In terms of biological role, catalyzes the formation of sulfite from adenosine 5'-phosphosulfate (APS) using thioredoxin as an electron donor. In Streptomyces coelicolor (strain ATCC BAA-471 / A3(2) / M145), this protein is Adenosine 5'-phosphosulfate reductase.